A 214-amino-acid polypeptide reads, in one-letter code: Small ribosomal subunit protein uS3c (214 aa).

The region spanning 39–111 (IRTYIHTISK…QLTINVLEVE (73 aa)) is the KH type-2 domain.

It belongs to the universal ribosomal protein uS3 family. As to quaternary structure, part of the 30S ribosomal subunit.

The protein resides in the plastid. It localises to the chloroplast. In Phaeodactylum tricornutum (strain CCAP 1055/1), this protein is Small ribosomal subunit protein uS3c (rps3).